Consider the following 136-residue polypeptide: Small integral membrane protein 23 (136 aa).

Topologically, residues 1 to 31 are cytoplasmic; sequence MTIQKTGCRGREAAEVVEQRRRSHHCDDRKQ. Residues 32-52 form a helical; Signal-anchor for type II membrane protein membrane-spanning segment; that stretch reads TLLALLILVLYLGMGISGSSW. Over 53-136 the chain is Extracellular; that stretch reads EVSGQTKDCN…DLRPEDPCFT (84 aa). A coiled-coil region spans residues 92–124; that stretch reads LKINLHGFLEKLEKEVRELEQLVRDLEFWLDAL.

It is found in the membrane. The sequence is that of Small integral membrane protein 23 (Smim23) from Mus musculus (Mouse).